The primary structure comprises 128 residues: Flagellar basal body rod protein FlgB (128 aa).

Belongs to the flagella basal body rod proteins family. As to quaternary structure, the basal body constitutes a major portion of the flagellar organelle and consists of a number of rings mounted on a central rod. In Gram-negative bacteria, at least four rings, L, P, S and M are present, whereas Gram-positive bacteria lack the L and P rings. The rod consists of about 26 subunits of FlgG in the distal portion, and FlgB, FlgC and FlgF build up the proximal portion of the rod with about 6 subunits each. Rod assembly occurs by export via the flagellum-specific pathway of its constituent proteins and by their incorporation into the rod structure in the probable order of FlgB, FlgC, FlgF and FlgG. Another protein, FliE, also assembles onto the stable rod structure.

The protein resides in the bacterial flagellum basal body. In terms of biological role, structural component of flagellum, the bacterial motility apparatus. Part of the rod structure of flagellar basal body. This chain is Flagellar basal body rod protein FlgB, found in Cereibacter sphaeroides (strain ATCC 17029 / ATH 2.4.9) (Rhodobacter sphaeroides).